We begin with the raw amino-acid sequence, 259 residues long: Tonin (259 aa).

A signal peptide spans 1 to 18; that stretch reads MWLQILSLVLSVGRIDAA. Residues 19–24 constitute a propeptide, activation peptide; sequence PPGQSR. Residues 25–256 enclose the Peptidase S1 domain; it reads IVGGYKCEKN…FTSWIKKVMK (232 aa). 5 cysteine pairs are disulfide-bonded: cysteine 31–cysteine 171, cysteine 48–cysteine 64, cysteine 150–cysteine 217, cysteine 182–cysteine 196, and cysteine 207–cysteine 232. Residue histidine 63 is the Charge relay system of the active site. Histidine 63 contributes to the Zn(2+) binding site. The N-linked (GlcNAc...) asparagine glycan is linked to asparagine 106. The Zn(2+) site is built by histidine 113 and histidine 115. The Charge relay system role is filled by aspartate 118. Asparagine 189 is a glycosylation site (N-linked (GlcNAc...) asparagine). Catalysis depends on serine 211, which acts as the Charge relay system.

It belongs to the peptidase S1 family. Kallikrein subfamily. Monomer. Requires Zn(2+) as cofactor. In terms of tissue distribution, found in submaxillary gland.

The enzyme catalyses Preferential cleavage of Arg-|-Xaa bonds in small molecule substrates. Highly selective action to release kallidin (lysyl-bradykinin) from kininogen involves hydrolysis of Met-|-Xaa or Leu-|-Xaa.. This protein has both trypsin- and chymotrypsin-like activities, being able to release angiotensin II from angiotensin I or angiotensinogen. This chain is Tonin (Klk2), found in Rattus norvegicus (Rat).